A 221-amino-acid polypeptide reads, in one-letter code: Telomere repeats-binding bouquet formation protein 2 (221 aa).

The protein belongs to the TERB2 family. Component of the MAJIN-TERB1-TERB2 complex, composed of MAJIN, TERB1 and TERB2.

It localises to the chromosome. Its subcellular location is the telomere. The protein localises to the nucleus inner membrane. Meiosis-specific telomere-associated protein involved in meiotic telomere attachment to the nucleus inner membrane, a crucial step for homologous pairing and synapsis. Component of the MAJIN-TERB1-TERB2 complex, which promotes telomere cap exchange by mediating attachment of telomeric DNA to the inner nuclear membrane and replacement of the protective cap of telomeric chromosomes: in early meiosis, the MAJIN-TERB1-TERB2 complex associates with telomeric DNA and the shelterin/telosome complex. During prophase, the complex matures and promotes release of the shelterin/telosome complex from telomeric DNA. The chain is Telomere repeats-binding bouquet formation protein 2 from Bos taurus (Bovine).